The sequence spans 148 residues: Nucleoside diphosphate kinase (148 aa).

6 residues coordinate ATP: lysine 9, phenylalanine 57, arginine 85, threonine 91, arginine 102, and asparagine 112. At threonine 91 the chain carries Phosphothreonine. The active-site Pros-phosphohistidine intermediate is the histidine 115. Position 122 is a phosphoserine (serine 122).

The protein belongs to the NDK family. Homotetramer. It depends on Mg(2+) as a cofactor.

It localises to the cytoplasm. It carries out the reaction a 2'-deoxyribonucleoside 5'-diphosphate + ATP = a 2'-deoxyribonucleoside 5'-triphosphate + ADP. The catalysed reaction is a ribonucleoside 5'-diphosphate + ATP = a ribonucleoside 5'-triphosphate + ADP. Major role in the synthesis of nucleoside triphosphates other than ATP. The ATP gamma phosphate is transferred to the NDP beta phosphate via a ping-pong mechanism, using a phosphorylated active-site intermediate. The polypeptide is Nucleoside diphosphate kinase (Bacillus licheniformis (strain ATCC 14580 / DSM 13 / JCM 2505 / CCUG 7422 / NBRC 12200 / NCIMB 9375 / NCTC 10341 / NRRL NRS-1264 / Gibson 46)).